A 1365-amino-acid chain; its full sequence is DNA-directed RNA polymerase subunit beta'' (1365 aa).

Residues Cys-224, Cys-295, Cys-302, and Cys-305 each coordinate Zn(2+).

The protein belongs to the RNA polymerase beta' chain family. RpoC2 subfamily. In terms of assembly, in plastids the minimal PEP RNA polymerase catalytic core is composed of four subunits: alpha, beta, beta', and beta''. When a (nuclear-encoded) sigma factor is associated with the core the holoenzyme is formed, which can initiate transcription. Zn(2+) is required as a cofactor.

Its subcellular location is the plastid. It is found in the chloroplast. It carries out the reaction RNA(n) + a ribonucleoside 5'-triphosphate = RNA(n+1) + diphosphate. Its function is as follows. DNA-dependent RNA polymerase catalyzes the transcription of DNA into RNA using the four ribonucleoside triphosphates as substrates. The chain is DNA-directed RNA polymerase subunit beta'' from Fagopyrum esculentum subsp. ancestrale (Wild buckwheat).